Consider the following 171-residue polypeptide: 3-hydroxydecanoyl-[acyl-carrier-protein] dehydratase (171 aa).

The active site involves His70.

This sequence belongs to the thioester dehydratase family. FabA subfamily. In terms of assembly, homodimer.

It is found in the cytoplasm. It catalyses the reaction a (3R)-hydroxyacyl-[ACP] = a (2E)-enoyl-[ACP] + H2O. It carries out the reaction (3R)-hydroxydecanoyl-[ACP] = (2E)-decenoyl-[ACP] + H2O. The catalysed reaction is (2E)-decenoyl-[ACP] = (3Z)-decenoyl-[ACP]. It participates in lipid metabolism; fatty acid biosynthesis. In terms of biological role, necessary for the introduction of cis unsaturation into fatty acids. Catalyzes the dehydration of (3R)-3-hydroxydecanoyl-ACP to E-(2)-decenoyl-ACP and then its isomerization to Z-(3)-decenoyl-ACP. Can catalyze the dehydratase reaction for beta-hydroxyacyl-ACPs with saturated chain lengths up to 16:0, being most active on intermediate chain length. This is 3-hydroxydecanoyl-[acyl-carrier-protein] dehydratase from Pseudomonas fluorescens (strain SBW25).